The following is a 721-amino-acid chain: 1,4-alpha-glucan branching enzyme GlgB (721 aa).

Asp-400 functions as the Nucleophile in the catalytic mechanism. The active-site Proton donor is Glu-453.

Belongs to the glycosyl hydrolase 13 family. GlgB subfamily. As to quaternary structure, monomer.

The enzyme catalyses Transfers a segment of a (1-&gt;4)-alpha-D-glucan chain to a primary hydroxy group in a similar glucan chain.. Its pathway is glycan biosynthesis; glycogen biosynthesis. Functionally, catalyzes the formation of the alpha-1,6-glucosidic linkages in glycogen by scission of a 1,4-alpha-linked oligosaccharide from growing alpha-1,4-glucan chains and the subsequent attachment of the oligosaccharide to the alpha-1,6 position. This is 1,4-alpha-glucan branching enzyme GlgB from Chlamydia felis (strain Fe/C-56) (Chlamydophila felis).